The following is a 494-amino-acid chain: Guanosine-5'-triphosphate,3'-diphosphate pyrophosphatase (494 aa).

This sequence belongs to the GppA/Ppx family. GppA subfamily.

The catalysed reaction is guanosine 3'-diphosphate 5'-triphosphate + H2O = guanosine 3',5'-bis(diphosphate) + phosphate + H(+). It functions in the pathway purine metabolism; ppGpp biosynthesis; ppGpp from GTP: step 2/2. Catalyzes the conversion of pppGpp to ppGpp. Guanosine pentaphosphate (pppGpp) is a cytoplasmic signaling molecule which together with ppGpp controls the 'stringent response', an adaptive process that allows bacteria to respond to amino acid starvation, resulting in the coordinated regulation of numerous cellular activities. The sequence is that of Guanosine-5'-triphosphate,3'-diphosphate pyrophosphatase from Cronobacter sakazakii (strain ATCC BAA-894) (Enterobacter sakazakii).